Consider the following 355-residue polypeptide: 3-dehydroquinate synthase (355 aa).

NAD(+)-binding positions include glutamate 71–lysine 76, glycine 105–aspartate 109, threonine 129–serine 130, lysine 142, and lysine 151. Glutamate 184, histidine 246, and histidine 263 together coordinate Zn(2+).

It belongs to the sugar phosphate cyclases superfamily. Dehydroquinate synthase family. Co(2+) is required as a cofactor. Zn(2+) serves as cofactor. The cofactor is NAD(+).

The protein resides in the cytoplasm. The enzyme catalyses 7-phospho-2-dehydro-3-deoxy-D-arabino-heptonate = 3-dehydroquinate + phosphate. The protein operates within metabolic intermediate biosynthesis; chorismate biosynthesis; chorismate from D-erythrose 4-phosphate and phosphoenolpyruvate: step 2/7. Catalyzes the conversion of 3-deoxy-D-arabino-heptulosonate 7-phosphate (DAHP) to dehydroquinate (DHQ). This is 3-dehydroquinate synthase from Streptococcus gordonii (strain Challis / ATCC 35105 / BCRC 15272 / CH1 / DL1 / V288).